A 482-amino-acid polypeptide reads, in one-letter code: Probable cytosol aminopeptidase (482 aa).

2 residues coordinate Mn(2+): Lys-251 and Asp-256. The active site involves Lys-263. 3 residues coordinate Mn(2+): Asp-274, Asp-333, and Glu-335. The active site involves Arg-337.

Belongs to the peptidase M17 family. It depends on Mn(2+) as a cofactor.

The protein resides in the cytoplasm. It carries out the reaction Release of an N-terminal amino acid, Xaa-|-Yaa-, in which Xaa is preferably Leu, but may be other amino acids including Pro although not Arg or Lys, and Yaa may be Pro. Amino acid amides and methyl esters are also readily hydrolyzed, but rates on arylamides are exceedingly low.. It catalyses the reaction Release of an N-terminal amino acid, preferentially leucine, but not glutamic or aspartic acids.. Functionally, presumably involved in the processing and regular turnover of intracellular proteins. Catalyzes the removal of unsubstituted N-terminal amino acids from various peptides. The polypeptide is Probable cytosol aminopeptidase (Acinetobacter baylyi (strain ATCC 33305 / BD413 / ADP1)).